The primary structure comprises 182 residues: Large ribosomal subunit protein uL5m (182 aa).

It belongs to the universal ribosomal protein uL5 family.

It is found in the mitochondrion. The polypeptide is Large ribosomal subunit protein uL5m (RPL5) (Reclinomonas americana).